A 187-amino-acid chain; its full sequence is Large ribosomal subunit protein bL32m (187 aa).

Residues Cys109, Cys112, Cys122, and Cys125 each coordinate Zn(2+).

Belongs to the bacterial ribosomal protein bL32 family. In terms of assembly, component of the mitochondrial ribosome large subunit (39S) which comprises a 16S rRNA and about 50 distinct proteins. Post-translationally, MRPL32 precursor is processed by the m-AAA protease (composed of AFG3L2 and SPG7), which cleaves the N-terminal transit peptide. Cleavage by the m-AAA protease takes place prior to assembly into the large subunit, an essential step for mitochondrial ribosome (mitoribosome) assembly. Proper processing by the m-AAA protease is dependent on the zinc-binding region within the tightly folded C-terminal domain of MRPL32: zinc-dependent folding halts degradation initiated from the N-terminus and triggers the release of mature MRPL32.

The protein localises to the mitochondrion. Functionally, component of the mitochondrial large ribosomal subunit (mt-LSU). The mitochondrial ribosome (mitoribosome) is a large ribonucleoprotein complex responsible for the synthesis of proteins inside mitochondria. In Mus musculus (Mouse), this protein is Large ribosomal subunit protein bL32m (Mrpl32).